Reading from the N-terminus, the 321-residue chain is Translation initiation factor eIF2B subunit alpha (321 aa).

This sequence belongs to the eIF-2B alpha/beta/delta subunits family. As to quaternary structure, component of the translation initiation factor 2B (eIF2B) complex which is a heterodecamer of two sets of five different subunits: alpha, beta, gamma, delta and epsilon. Subunits alpha, beta and delta comprise a regulatory subcomplex and subunits epsilon and gamma comprise a catalytic subcomplex. Within the complex, the hexameric regulatory complex resides at the center, with the two heterodimeric catalytic subcomplexes bound on opposite sides.

The protein localises to the cytoplasm. It is found in the cytosol. Acts as a component of the translation initiation factor 2B (eIF2B) complex, which catalyzes the exchange of GDP for GTP on eukaryotic initiation factor 2 (eIF2) gamma subunit. Its guanine nucleotide exchange factor activity is repressed when bound to eIF2 complex phosphorylated on the alpha subunit, thereby limiting the amount of methionyl-initiator methionine tRNA available to the ribosome and consequently global translation is repressed. The protein is Translation initiation factor eIF2B subunit alpha (eif2b1) of Dictyostelium discoideum (Social amoeba).